A 416-amino-acid polypeptide reads, in one-letter code: UDP-N-acetylglucosamine 1-carboxyvinyltransferase (416 aa).

22–23 (KN) is a binding site for phosphoenolpyruvate. Arginine 92 contributes to the UDP-N-acetyl-alpha-D-glucosamine binding site. Residue cysteine 116 is the Proton donor of the active site. The residue at position 116 (cysteine 116) is a 2-(S-cysteinyl)pyruvic acid O-phosphothioketal. UDP-N-acetyl-alpha-D-glucosamine-binding positions include 121 to 125 (RPVDQ), aspartate 304, and isoleucine 326.

This sequence belongs to the EPSP synthase family. MurA subfamily.

It is found in the cytoplasm. The enzyme catalyses phosphoenolpyruvate + UDP-N-acetyl-alpha-D-glucosamine = UDP-N-acetyl-3-O-(1-carboxyvinyl)-alpha-D-glucosamine + phosphate. Its pathway is cell wall biogenesis; peptidoglycan biosynthesis. Its function is as follows. Cell wall formation. Adds enolpyruvyl to UDP-N-acetylglucosamine. This chain is UDP-N-acetylglucosamine 1-carboxyvinyltransferase, found in Cupriavidus metallidurans (strain ATCC 43123 / DSM 2839 / NBRC 102507 / CH34) (Ralstonia metallidurans).